The primary structure comprises 398 residues: uncharacterized protein (398 aa).

Residues 21-253 (TNFGPTNLII…WQLTSTSEPE (233 aa)) form the Radical SAM core domain. [4Fe-4S] cluster-binding residues include Cys-37, Cys-41, and Cys-44.

This sequence belongs to the radical SAM superfamily. Anaerobic sulfatase-maturating enzyme family. Requires [4Fe-4S] cluster as cofactor.

This is an uncharacterized protein from Synechocystis sp. (strain ATCC 27184 / PCC 6803 / Kazusa).